The sequence spans 431 residues: Glutamate-1-semialdehyde 2,1-aminomutase (431 aa).

Position 265 is an N6-(pyridoxal phosphate)lysine (Lys265).

Belongs to the class-III pyridoxal-phosphate-dependent aminotransferase family. HemL subfamily. Homodimer. Pyridoxal 5'-phosphate serves as cofactor.

It is found in the cytoplasm. It catalyses the reaction (S)-4-amino-5-oxopentanoate = 5-aminolevulinate. Its pathway is porphyrin-containing compound metabolism; protoporphyrin-IX biosynthesis; 5-aminolevulinate from L-glutamyl-tRNA(Glu): step 2/2. The chain is Glutamate-1-semialdehyde 2,1-aminomutase from Vibrio vulnificus (strain YJ016).